The chain runs to 359 residues: Heat-inducible transcription repressor HrcA (359 aa).

Belongs to the HrcA family.

Functionally, negative regulator of class I heat shock genes (grpE-dnaK-dnaJ and groELS operons). Prevents heat-shock induction of these operons. The sequence is that of Heat-inducible transcription repressor HrcA from Roseiflexus sp. (strain RS-1).